The primary structure comprises 197 residues: MYQIVLASGSPRRKEILSQVGINFTVCVSNMEEITSETLPENIVMELSKMKAHDIAKQYETNTIIIGSDTIVAYKNQILGKPKNEDHAKEMLQLLSGVTHEVYTGVTVIIKNDSGEVEERTFFEISKVTVSDLTEEEIMDYIKSKEPMDKAGAYAVQGRFAAHVTRIEGDYYTIVGLPIARLYQEVKKFGIDLVKQM.

Residue D69 is the Proton acceptor of the active site.

It belongs to the Maf family. YhdE subfamily. The cofactor is a divalent metal cation.

The protein resides in the cytoplasm. It carries out the reaction dTTP + H2O = dTMP + diphosphate + H(+). The catalysed reaction is UTP + H2O = UMP + diphosphate + H(+). Functionally, nucleoside triphosphate pyrophosphatase that hydrolyzes dTTP and UTP. May have a dual role in cell division arrest and in preventing the incorporation of modified nucleotides into cellular nucleic acids. This is dTTP/UTP pyrophosphatase from Lachnoclostridium phytofermentans (strain ATCC 700394 / DSM 18823 / ISDg) (Clostridium phytofermentans).